The following is a 411-amino-acid chain: Adenylosuccinate synthetase (411 aa).

GTP-binding positions include 11–17 and 39–41; these read GDEGKGK and GHT. The active-site Proton acceptor is the aspartate 12. Mg(2+) contacts are provided by aspartate 12 and glycine 39. Residues 12–15, 37–40, threonine 121, arginine 135, glutamine 215, threonine 230, and arginine 294 each bind IMP; these read DEGK and NAGH. Catalysis depends on histidine 40, which acts as the Proton donor. 290 to 296 lines the substrate pocket; that stretch reads TTTKRPR. Residues arginine 296, 322 to 324, and 400 to 402 contribute to the GTP site; these read KLD and STS.

It belongs to the adenylosuccinate synthetase family. Homodimer. Mg(2+) serves as cofactor.

The protein resides in the cytoplasm. It carries out the reaction IMP + L-aspartate + GTP = N(6)-(1,2-dicarboxyethyl)-AMP + GDP + phosphate + 2 H(+). The protein operates within purine metabolism; AMP biosynthesis via de novo pathway; AMP from IMP: step 1/2. Functionally, plays an important role in the de novo pathway of purine nucleotide biosynthesis. Catalyzes the first committed step in the biosynthesis of AMP from IMP. The protein is Adenylosuccinate synthetase of Helicobacter pylori (strain HPAG1).